We begin with the raw amino-acid sequence, 187 residues long: MNHEELINSLTKKMNGALQVLDADLKGLRVGQASAYFLDPVQVEAYNSRVPILQVATISVSDTKTILVQVWDKSLVKAVKKAIMEANLGVSIISDDNQIIRLQLPIPSEERRKELVKIAHKYQEKSKIIVRNIRRDGIELIKQMEQNTECSKDEAHIYSKEIQELTDKYCDKIDKIIKLKEQDIINL.

The protein belongs to the RRF family.

It is found in the cytoplasm. Functionally, responsible for the release of ribosomes from messenger RNA at the termination of protein biosynthesis. May increase the efficiency of translation by recycling ribosomes from one round of translation to another. This is Ribosome-recycling factor from Orientia tsutsugamushi (strain Boryong) (Rickettsia tsutsugamushi).